A 724-amino-acid polypeptide reads, in one-letter code: Ribosomal RNA processing protein 1 homolog B (724 aa).

Residues 331–576 (NGAPLSSAED…SKKKKKTMKL (246 aa)) form a disordered region. Phosphoserine is present on residues Ser336 and Ser370. Over residues 373 to 386 (HIHKKKRKKRKRSH) the composition is skewed to basic residues. Phosphoserine occurs at positions 432 and 438. The span at 448–461 (HNKRKRPRKKKLRA) shows a compositional bias: basic residues. Over residues 483–496 (SGHSQSSAAHISSS) the composition is skewed to low complexity. Ser494 is modified (phosphoserine). Polar residues-rich tracts occupy residues 513–528 (DSSS…TPTS) and 548–564 (KTAS…SQKP). N6-acetyllysine is present on Lys618. The segment at 625–649 (AKNSSATRPQGPAGQLNKTPSSSKK) is disordered. A compositionally biased stretch (polar residues) spans 640 to 649 (LNKTPSSSKK). Ser668 and Ser672 each carry phosphoserine. Arg678 carries the citrulline modification. A disordered region spans residues 687–724 (PLHGVLKTATSSPASTPLSPMRLPATTPKRRPRAADFF). Thr694 is modified (phosphothreonine). The segment covering 694 to 706 (TATSSPASTPLSP) has biased composition (low complexity). Phosphoserine occurs at positions 698 and 701.

It belongs to the RRP1 family. In terms of assembly, interacts with the transcriptional activator E2F1. Interacts with serine/threonine-protein phosphatase PP1 subunits PPP1CB and PPP1CC but not with PPP1CA. Interacts with 60S ribosomal proteins RPL5 and RPL27, ribosomal processing protein RRP1/NNP1 and other nucleolar proteins including NOP2/NOL1 and FBL. Also interacts with nucleolar protein NPM1/B23. Interacts with splicing factor SRSF1 and LUC7L3/CROP. Interacts with GTPase activator SIPA1. Interacts with H1-10, NCL, PARP1, TRIM28 and YBX3. In terms of processing, citrullinated by PADI4.

It localises to the nucleus. The protein localises to the nucleolus. The protein resides in the nucleoplasm. It is found in the chromosome. Positively regulates DNA damage-induced apoptosis by acting as a transcriptional coactivator of proapoptotic target genes of the transcriptional activator E2F1. Likely to play a role in ribosome biogenesis by targeting serine/threonine protein phosphatase PP1 to the nucleolus. Involved in regulation of mRNA splicing. Inhibits SIPA1 GTPase activity. Involved in regulating expression of extracellular matrix genes. Associates with chromatin and may play a role in modulating chromatin structure. In Mus musculus (Mouse), this protein is Ribosomal RNA processing protein 1 homolog B (Rrp1b).